Consider the following 148-residue polypeptide: Deoxyuridine 5'-triphosphate nucleotidohydrolase (148 aa).

Substrate-binding positions include 68–70 (RSG), asparagine 81, and 85–87 (TID).

Belongs to the dUTPase family. Mg(2+) is required as a cofactor.

The enzyme catalyses dUTP + H2O = dUMP + diphosphate + H(+). It functions in the pathway pyrimidine metabolism; dUMP biosynthesis; dUMP from dCTP (dUTP route): step 2/2. In terms of biological role, this enzyme is involved in nucleotide metabolism: it produces dUMP, the immediate precursor of thymidine nucleotides and it decreases the intracellular concentration of dUTP so that uracil cannot be incorporated into DNA. In Geobacter metallireducens (strain ATCC 53774 / DSM 7210 / GS-15), this protein is Deoxyuridine 5'-triphosphate nucleotidohydrolase.